The following is a 610-amino-acid chain: Pentatricopeptide repeat-containing protein At3g15590, mitochondrial (610 aa).

Residues 1-71 (MYSLSRILQR…FSRFFGIHKL (71 aa)) constitute a mitochondrion transit peptide. The disordered stretch occupies residues 88-142 (EELSESEEAVPVSGDVPEGVVDDDSLFEPELGSDNDDLEIEEKHSKDGGKPTKKR). A compositionally biased stretch (acidic residues) spans 107–127 (VVDDDSLFEPELGSDNDDLEI). Residues 128–137 (EEKHSKDGGK) show a composition bias toward basic and acidic residues. PPR repeat units follow at residues 241–275 (GEVVYRTLLANCVLKHHVNKAEDIFNKMKELKFPT), 276–309 (SVFACNQLLLLYSMHDRKKISDVLLLMERENIKP), 310–344 (SRATYHFLINSKGLAGDITGMEKIVETIKEEGIEL), 345–379 (DPELQSILAKYYIRAGLKERAQDLMKEIEGKGLQQ), 380–410 (TPWVCRSLLPLYADIGDSDNVRRLSRFVDQN), 412–442 (RYDNCISAIKAWGKLKEVEEAEAVFERLVEK), 447–481 (PMMPYFALMEIYTENKMLAKGRDLVKRMGNAGIAI), 482–517 (GPSTWHALVKLYIKAGEVGKAELILNRATKDNKMRP), and 518–552 (MFTTYMAILEEYAKRGDVHNTEKVFMKMKRASYAA).

It belongs to the PPR family. P subfamily.

The protein resides in the mitochondrion. The chain is Pentatricopeptide repeat-containing protein At3g15590, mitochondrial from Arabidopsis thaliana (Mouse-ear cress).